The sequence spans 197 residues: Probable GTP-binding protein EngB (197 aa).

An EngB-type G domain is found at 24–197 (DIPEIALAGR…WDAILEKVNK (174 aa)). GTP-binding positions include 32–39 (GRSNVGKS), 59–63 (GKTQL), 77–80 (DVPG), 144–147 (TKAD), and 176–178 (FSS). The Mg(2+) site is built by Ser-39 and Thr-61.

Belongs to the TRAFAC class TrmE-Era-EngA-EngB-Septin-like GTPase superfamily. EngB GTPase family. It depends on Mg(2+) as a cofactor.

Its function is as follows. Necessary for normal cell division and for the maintenance of normal septation. The polypeptide is Probable GTP-binding protein EngB (Streptococcus gordonii (strain Challis / ATCC 35105 / BCRC 15272 / CH1 / DL1 / V288)).